Here is a 246-residue protein sequence, read N- to C-terminus: Putative KilA-N domain-containing protein L33 (246 aa).

A KilA-N domain is found at 20 to 129 (RYTKCQYCDI…AKVSLWIEEW (110 aa)).

The sequence is that of Putative KilA-N domain-containing protein L33 from Acanthamoeba polyphaga mimivirus (APMV).